Reading from the N-terminus, the 359-residue chain is UPF0283 membrane protein RHECIAT_CH0002430 (359 aa).

Residues 1 to 50 (MSKPPSDPPRRPPAAFAYEDEASEPRNSGRQQQGRRKPESFSENIVVTPD) are disordered. 2 helical membrane-spanning segments follow: residues 77–97 (FGKIAAGAFGILLSLGLGLWT) and 111–131 (LGYAALGVLAIGILAVLALVI).

Belongs to the UPF0283 family.

The protein resides in the cell inner membrane. The polypeptide is UPF0283 membrane protein RHECIAT_CH0002430 (Rhizobium etli (strain CIAT 652)).